We begin with the raw amino-acid sequence, 677 residues long: Methionine--tRNA ligase (677 aa).

Residues proline 15 to histidine 25 carry the 'HIGH' region motif. The Zn(2+) site is built by cysteine 146, cysteine 149, cysteine 159, and cysteine 162. The 'KMSKS' region signature appears at lysine 333–serine 337. Position 336 (lysine 336) interacts with ATP. In terms of domain architecture, tRNA-binding spans aspartate 575–lysine 677.

This sequence belongs to the class-I aminoacyl-tRNA synthetase family. MetG type 1 subfamily. Homodimer. The cofactor is Zn(2+).

It is found in the cytoplasm. It carries out the reaction tRNA(Met) + L-methionine + ATP = L-methionyl-tRNA(Met) + AMP + diphosphate. Functionally, is required not only for elongation of protein synthesis but also for the initiation of all mRNA translation through initiator tRNA(fMet) aminoacylation. This is Methionine--tRNA ligase from Salmonella typhi.